A 291-amino-acid polypeptide reads, in one-letter code: MSNTEFHPHIGVGLRLPHHDHFHHHRPALSWLEIHSENYFQPNSFHRQQLNQMAEHYQISCHGIGLSLGSVAGVNPQHLLRLKQLVDDLQPFLVSDHLSWSENGGHYFNDLLPLPYTEEALEVFCRNVLHVQDALKRPILIENPSSYLKYQHSTISEWQFLTEVQRRTDCRLLLDLNNVYVSAFNHGFDCQTYLEAIPAACVDEIHLAGFTIKSLEQGEIWIDTHSQPVSAEVWQLYQQWIAQHGSRHTLIEWDLDLPPVDVLLNEAKKADTLLRASLLHTNPMHPSLALG.

It belongs to the UPF0276 family.

The sequence is that of UPF0276 protein VV1_0952 from Vibrio vulnificus (strain CMCP6).